Here is a 540-residue protein sequence, read N- to C-terminus: V-set and immunoglobulin domain-containing protein 10 (540 aa).

The signal sequence occupies residues 1–30 (MAAGGSAPEPRVLVCLGALLAGWVAVGLEA). 4 consecutive Ig-like C2-type domains span residues 31–119 (VVIG…WLQV), 123–215 (PYQI…RKVT), 223–309 (PPPS…VQIR), and 311–404 (PSLL…IWLS). Residues 31 to 413 (VVIGEVHENV…SVKEPLNIGG (383 aa)) lie on the Extracellular side of the membrane. Asn-39, Asn-46, Asn-70, Asn-108, Asn-138, Asn-171, Asn-180, and Asn-198 each carry an N-linked (GlcNAc...) asparagine glycan. Cys-44 and Cys-103 are joined by a disulfide. 2 disulfide bridges follow: Cys-153-Cys-201 and Cys-245-Cys-290. A glycan (N-linked (GlcNAc...) asparagine) is linked at Asn-326. A disulfide bridge connects residues Cys-331 and Cys-388. The helical transmembrane segment at 414–434 (IVGTIVSLLLLGLAIISGLLL) threads the bilayer. The Cytoplasmic portion of the chain corresponds to 435–540 (HYSPVFCWKV…DIVQEEDRPV (106 aa)). A compositionally biased stretch (acidic residues) spans 461-477 (DSEEEEEEEEEEEEDAA). Disordered regions lie at residues 461 to 500 (DSEEEEEEEEEEEEDAAVGEQEGAREREELPKEIPKQDHI) and 513 to 540 (QMGNGFQDLQDDSSEEQSDIVQEEDRPV). Basic and acidic residues predominate over residues 482-500 (EGAREREELPKEIPKQDHI). The segment covering 521–534 (LQDDSSEEQSDIVQ) has biased composition (acidic residues).

Its subcellular location is the membrane. The chain is V-set and immunoglobulin domain-containing protein 10 (VSIG10) from Homo sapiens (Human).